Consider the following 3640-residue polypeptide: Serine/threonine-protein kinase SMG1 (3640 aa).

The segment covering 21–34 (NDWQPRSDSLSASQ) has biased composition (polar residues). Residues 21-41 (NDWQPRSDSLSASQDGVKCSV) are disordered. The FAT domain maps to 1495 to 1843 (YCHSGKCELA…LYPAIVGSIS (349 aa)). An HEAT repeat occupies 1794–1829 (APWRGIIPQLFSRLNHPEAYIRQSICSLLCRVAQDS). The disordered stretch occupies residues 1870 to 1890 (GLCGGESETGSGPTSQESSRG). A compositionally biased stretch (low complexity) spans 1874–1887 (GESETGSGPTSQES). The region spanning 2102–2441 (VGNTITILPT…MERDITRSLF (340 aa)) is the PI3K/PI4K catalytic domain. Positions 2108 to 2114 (ILPTKTK) are G-loop. The catalytic loop stretch occupies residues 2310 to 2318 (GLGDRHLDN). The interval 2330 to 2354 (HIDYNVCFEKGKSLRVPEKVPFRMT) is activation loop. Positions 3608–3640 (RRMSVTEQVDYVIKEATNVDNLAQLYEGWTAWV) constitute an FATC domain.

The protein belongs to the PI3/PI4-kinase family. Requires Mn(2+) as cofactor. Post-translationally, autophosphorylated.

The protein resides in the nucleus. It is found in the cytoplasm. It carries out the reaction L-seryl-[protein] + ATP = O-phospho-L-seryl-[protein] + ADP + H(+). The catalysed reaction is L-threonyl-[protein] + ATP = O-phospho-L-threonyl-[protein] + ADP + H(+). In terms of biological role, serine/threonine protein kinase involved in both mRNA surveillance and genotoxic stress response pathways. Recognizes the substrate consensus sequence [ST]-Q. Plays a central role in nonsense-mediated decay (NMD) of mRNAs containing premature stop codons by phosphorylating UPF1/RENT1. This is Serine/threonine-protein kinase SMG1 from Danio rerio (Zebrafish).